Here is a 64-residue protein sequence, read N- to C-terminus: Large ribosomal subunit protein bL35 (64 aa).

A disordered region spans residues 1-55 (MPKMKTNKSVSARFKLTASGQLKRTRPGKRHKLSKKSSQEKRNLSKQPLVDKGQV). Positions 23–35 (KRTRPGKRHKLSK) are enriched in basic residues.

This sequence belongs to the bacterial ribosomal protein bL35 family.

This is Large ribosomal subunit protein bL35 from Chlamydia pneumoniae (Chlamydophila pneumoniae).